The following is a 387-amino-acid chain: Acetylornithine aminotransferase (387 aa).

Pyridoxal 5'-phosphate-binding positions include 97-98 (GT) and Phe130. Residue Arg133 participates in N(2)-acetyl-L-ornithine binding. Pyridoxal 5'-phosphate is bound at residue 215–218 (DEVQ). Lys244 carries the post-translational modification N6-(pyridoxal phosphate)lysine. Thr273 provides a ligand contact to pyridoxal 5'-phosphate.

Belongs to the class-III pyridoxal-phosphate-dependent aminotransferase family. ArgD subfamily. Homodimer. It depends on pyridoxal 5'-phosphate as a cofactor.

The protein localises to the cytoplasm. The catalysed reaction is N(2)-acetyl-L-ornithine + 2-oxoglutarate = N-acetyl-L-glutamate 5-semialdehyde + L-glutamate. It functions in the pathway amino-acid biosynthesis; L-arginine biosynthesis; N(2)-acetyl-L-ornithine from L-glutamate: step 4/4. This is Acetylornithine aminotransferase from Clostridium acetobutylicum (strain ATCC 824 / DSM 792 / JCM 1419 / IAM 19013 / LMG 5710 / NBRC 13948 / NRRL B-527 / VKM B-1787 / 2291 / W).